Consider the following 95-residue polypeptide: Aspartyl/glutamyl-tRNA(Asn/Gln) amidotransferase subunit C (95 aa).

The protein belongs to the GatC family. In terms of assembly, heterotrimer of A, B and C subunits.

It carries out the reaction L-glutamyl-tRNA(Gln) + L-glutamine + ATP + H2O = L-glutaminyl-tRNA(Gln) + L-glutamate + ADP + phosphate + H(+). The catalysed reaction is L-aspartyl-tRNA(Asn) + L-glutamine + ATP + H2O = L-asparaginyl-tRNA(Asn) + L-glutamate + ADP + phosphate + 2 H(+). In terms of biological role, allows the formation of correctly charged Asn-tRNA(Asn) or Gln-tRNA(Gln) through the transamidation of misacylated Asp-tRNA(Asn) or Glu-tRNA(Gln) in organisms which lack either or both of asparaginyl-tRNA or glutaminyl-tRNA synthetases. The reaction takes place in the presence of glutamine and ATP through an activated phospho-Asp-tRNA(Asn) or phospho-Glu-tRNA(Gln). The polypeptide is Aspartyl/glutamyl-tRNA(Asn/Gln) amidotransferase subunit C (Brucella abortus (strain S19)).